The following is a 216-amino-acid chain: Probable GTP-binding protein EngB (216 aa).

The 178-residue stretch at 37–214 folds into the EngB-type G domain; the sequence is QGLEVAFAGR…RAAIIKLVAE (178 aa). Residues 45 to 52, 72 to 76, 92 to 95, 159 to 162, and 193 to 195 contribute to the GTP site; these read GRSNVGKS, GRTQE, DMPG, TKAD, and TSS. Mg(2+)-binding residues include Ser-52 and Thr-74.

Belongs to the TRAFAC class TrmE-Era-EngA-EngB-Septin-like GTPase superfamily. EngB GTPase family. The cofactor is Mg(2+).

Functionally, necessary for normal cell division and for the maintenance of normal septation. The protein is Probable GTP-binding protein EngB of Rhodopseudomonas palustris (strain BisA53).